Here is a 309-residue protein sequence, read N- to C-terminus: Epidermal retinol dehydrogenase 2 (309 aa).

Residues 11–31 (LFIFLGKSLFSLLEAMIFALL) traverse the membrane as a helical segment. 44-68 (LITGAGSGLGRLLALQFARLGSVLV) is a binding site for NADP(+). S177 lines the substrate pocket. The active-site Proton acceptor is the Y190. A helical membrane pass occupies residues 270–290 (LLYFMMFLKSFLPLKTGLLIA).

This sequence belongs to the short-chain dehydrogenases/reductases (SDR) family. Detected in adult lung. Detected at low levels in adult brain, heart, testis, placenta, cervix, pancreas, uterus, stomach, rectum, small intestine, colon, esophagus, thymus, skin, and skin keratinocyte. Expression is higher in psoriasis lesions relative to unaffected skin from psoriasis patients. Detected in fetal kidney, skin and lung.

The protein localises to the endoplasmic reticulum membrane. It carries out the reaction all-trans-retinol--[retinol-binding protein] + NAD(+) = all-trans-retinal--[retinol-binding protein] + NADH + H(+). It functions in the pathway cofactor metabolism; retinol metabolism. Its function is as follows. Oxidoreductase with strong preference for NAD. Active in both the oxidative and reductive directions. Oxidizes all-trans-retinol in all-trans-retinaldehyde. No activity was detected with 11-cis-retinol or 11-cis-retinaldehyde as substrates with either NAD(+)/NADH or NADP(+)/NADPH. This chain is Epidermal retinol dehydrogenase 2, found in Homo sapiens (Human).